Consider the following 360-residue polypeptide: Catabolic L-serine/threonine dehydratase (360 aa).

Position 2 is an N-acetylserine (serine 2). At lysine 37 the chain carries N6-(pyridoxal phosphate)lysine.

The protein belongs to the serine/threonine dehydratase family. The cofactor is pyridoxal 5'-phosphate.

The protein resides in the mitochondrion. The catalysed reaction is L-serine = pyruvate + NH4(+). It carries out the reaction L-threonine = 2-oxobutanoate + NH4(+). This chain is Catabolic L-serine/threonine dehydratase (CHA1), found in Saccharomyces cerevisiae (strain ATCC 204508 / S288c) (Baker's yeast).